A 225-amino-acid chain; its full sequence is Ribosomal RNA small subunit methyltransferase G (225 aa).

Residues G71, L76, 121–122 (AE), and R139 contribute to the S-adenosyl-L-methionine site. A disordered region spans residues 204 to 225 (VVEARRATPSNGRGRPGRSSRR).

This sequence belongs to the methyltransferase superfamily. RNA methyltransferase RsmG family.

The protein resides in the cytoplasm. Its function is as follows. Specifically methylates the N7 position of guanine in position 518 of 16S rRNA. The chain is Ribosomal RNA small subunit methyltransferase G from Mycobacterium sp. (strain JLS).